The primary structure comprises 386 residues: Formate-dependent phosphoribosylglycinamide formyltransferase (386 aa).

N(1)-(5-phospho-beta-D-ribosyl)glycinamide is bound by residues 15–16 and glutamate 75; that span reads EL. ATP is bound by residues arginine 107, lysine 148, 153-158, 188-191, and glutamate 196; these read SSGKGQ and EQFI. Positions 112 to 301 constitute an ATP-grasp domain; sequence ALAAQQLNLQ…EFELHLRAIV (190 aa). 2 residues coordinate Mg(2+): glutamate 260 and glutamate 272. N(1)-(5-phospho-beta-D-ribosyl)glycinamide-binding positions include aspartate 279, lysine 349, and 356–357; that span reads RR.

It belongs to the PurK/PurT family. Homodimer.

It carries out the reaction N(1)-(5-phospho-beta-D-ribosyl)glycinamide + formate + ATP = N(2)-formyl-N(1)-(5-phospho-beta-D-ribosyl)glycinamide + ADP + phosphate + H(+). It participates in purine metabolism; IMP biosynthesis via de novo pathway; N(2)-formyl-N(1)-(5-phospho-D-ribosyl)glycinamide from N(1)-(5-phospho-D-ribosyl)glycinamide (formate route): step 1/1. Functionally, involved in the de novo purine biosynthesis. Catalyzes the transfer of formate to 5-phospho-ribosyl-glycinamide (GAR), producing 5-phospho-ribosyl-N-formylglycinamide (FGAR). Formate is provided by PurU via hydrolysis of 10-formyl-tetrahydrofolate. This is Formate-dependent phosphoribosylglycinamide formyltransferase from Francisella tularensis subsp. tularensis (strain SCHU S4 / Schu 4).